A 348-amino-acid chain; its full sequence is 4-hydroxyphenylpyruvate dioxygenase (348 aa).

2 consecutive VOC domains span residues 11-141 (GFAF…ITSP) and 151-303 (AIDH…IFTE). Fe cation-binding residues include His-154, His-232, and Glu-312.

Belongs to the 4HPPD family. Fe cation is required as a cofactor.

The catalysed reaction is 3-(4-hydroxyphenyl)pyruvate + O2 = homogentisate + CO2. Its function is as follows. Catalyzes the transformation of p-hydroxyphenylpyruvate into HGA. Has hemolytic and brown pigment production activity. The sequence is that of 4-hydroxyphenylpyruvate dioxygenase (lly) from Legionella pneumophila subsp. pneumophila (strain Philadelphia 1 / ATCC 33152 / DSM 7513).